The sequence spans 309 residues: 11-beta-hydroxysteroid dehydrogenase-like 3 (309 aa).

The helical; Signal-anchor for type II membrane protein transmembrane segment at 10–30 (LLLPPLTIIFLFLFYPFYLLI) threads the bilayer. Residues 54-80 (GASSGIGEHVAYEYAKKGAYLALVARR) and aspartate 105 each bind NADP(+). Substrate is bound at residue serine 184. Tyrosine 197 (proton acceptor) is an active-site residue. Residues 197-201 (YAASK) and lysine 201 each bind NADP(+).

This sequence belongs to the short-chain dehydrogenases/reductases (SDR) family.

The protein localises to the membrane. This Arabidopsis thaliana (Mouse-ear cress) protein is 11-beta-hydroxysteroid dehydrogenase-like 3 (HSD3).